The sequence spans 947 residues: DNA polymerase (947 aa).

The protein belongs to the DNA polymerase type-B family.

The catalysed reaction is DNA(n) + a 2'-deoxyribonucleoside 5'-triphosphate = DNA(n+1) + diphosphate. This Red sea bream iridovirus (RSIV) protein is DNA polymerase.